The primary structure comprises 556 residues: MKTDIDIAQSITLKPITEIVEKVGISFDDIELYGKYKAKLSFDKINAVKDNAPGKLILVTAINPTPAGEGKSTITIGLADALSKIGKKTMIALREPSLGPVMGIKGGAAGGGYAQVLPMEDINLHFTGDMHAITTANNALSALIDNHIHQGNVIGIDQRRIIWKRVVDLNDRALRKVTVGLGGPLNGIPREDGFDITVASEIMAILCLATDINDLKERLANIVIGYRFDCSPVYVRDLAVEGALTLILKDAIKPNLVQTIYGTPAFVHGGPFANIAHGCNSVLATTTALRLADYTVTEAGFGADLGAEKFLDIKVPNLPKAPDAVVIVATLRALKMHGGVAKTELSAENVEAVKAGFSNLKRHVENIRKYGIPAVVAINEFVSDTAAEIAVLKELCAAIGVPVELASVWANGADGGVELAETVVATIDNQAASYQRLYKSEDSLEEKVTKIVTQIYGGTGVVFEKKARNQLTEFAKNGWDKLPVCMAKTQYSFSDDQFALGAPTDFDITVREFVPKLGAGFIVALTGDVMTMPGLPKAPVALNMDVAADGTAIGLF.

65 to 72 (TPAGEGKS) lines the ATP pocket.

This sequence belongs to the formate--tetrahydrofolate ligase family.

The catalysed reaction is (6S)-5,6,7,8-tetrahydrofolate + formate + ATP = (6R)-10-formyltetrahydrofolate + ADP + phosphate. The protein operates within one-carbon metabolism; tetrahydrofolate interconversion. The sequence is that of Formate--tetrahydrofolate ligase from Streptococcus suis (strain 98HAH33).